We begin with the raw amino-acid sequence, 166 residues long: Deoxyuridine 5'-triphosphate nucleotidohydrolase (166 aa).

The segment at 1–24 is disordered; sequence MACVNEPSPKLQKLDRNGIHGDSS. E138 contributes to the Mg(2+) binding site.

Belongs to the dUTPase family. Homotrimer. Requires Mg(2+) as cofactor.

The catalysed reaction is dUTP + H2O = dUMP + diphosphate + H(+). Its pathway is pyrimidine metabolism; dUMP biosynthesis; dUMP from dCTP (dUTP route): step 2/2. Its function is as follows. This enzyme is involved in nucleotide metabolism: it produces dUMP, the immediate precursor of thymidine nucleotides and it decreases the intracellular concentration of dUTP, preventing uracil incorporation into DNA. This is Deoxyuridine 5'-triphosphate nucleotidohydrolase (DUT) from Arabidopsis thaliana (Mouse-ear cress).